Here is a 232-residue protein sequence, read N- to C-terminus: Zinc-finger homeodomain protein 5 (232 aa).

The segment covering 1–11 (MELSEHEEDAG) has biased composition (acidic residues). The interval 1 to 25 (MELSEHEEDAGDVGGGCSSPPTPPH) is disordered. The ZF-HD dimerization-type; degenerate zinc finger occupies 40–86 (YHECLRNHAAASGGHVVDGCGEFMPASTEEPLACAACGCHRSFHRRD). Positions 126–170 (GLPFPGYGTPSGGTGTTTASSSDERLRPSPVQPRRRSRTTFTREQ) are disordered. The segment at residues 159–222 (RRRSRTTFTR…NNKHSFKQKQ (64 aa)) is a DNA-binding region (homeobox).

As to quaternary structure, homo- and heterodimer with other ZFHD proteins.

The protein resides in the nucleus. Functionally, putative transcription factor. The polypeptide is Zinc-finger homeodomain protein 5 (ZHD5) (Oryza sativa subsp. indica (Rice)).